Consider the following 47-residue polypeptide: Potassium channel toxin gamma-KTx 5.1 (47 aa).

Intrachain disulfides connect Cys-5–Cys-23, Cys-11–Cys-34, Cys-20–Cys-39, and Cys-24–Cys-41.

This sequence belongs to the ergtoxin family. Gamma-KTx 5 subfamily. As to expression, expressed by the venom gland.

It is found in the secreted. In terms of biological role, reversibly blocks Kv11/ERG potassium channels. The sequence is that of Potassium channel toxin gamma-KTx 5.1 from Centruroides sculpturatus (Arizona bark scorpion).